A 279-amino-acid chain; its full sequence is Acetylglutamate kinase (279 aa).

Substrate contacts are provided by residues 64–65, Arg-86, and Asn-177; that span reads GG.

The protein belongs to the acetylglutamate kinase family. ArgB subfamily.

The protein resides in the cytoplasm. The catalysed reaction is N-acetyl-L-glutamate + ATP = N-acetyl-L-glutamyl 5-phosphate + ADP. The protein operates within amino-acid biosynthesis; L-arginine biosynthesis; N(2)-acetyl-L-ornithine from L-glutamate: step 2/4. Functionally, catalyzes the ATP-dependent phosphorylation of N-acetyl-L-glutamate. In Campylobacter jejuni subsp. jejuni serotype O:6 (strain 81116 / NCTC 11828), this protein is Acetylglutamate kinase.